Consider the following 247-residue polypeptide: Carboxy-S-adenosyl-L-methionine synthase (247 aa).

Residues Y39, 64-66, 89-90, 117-118, N132, and R199 contribute to the S-adenosyl-L-methionine site; these read GCS, DN, and DI.

It belongs to the class I-like SAM-binding methyltransferase superfamily. Cx-SAM synthase family. As to quaternary structure, homodimer.

The enzyme catalyses prephenate + S-adenosyl-L-methionine = carboxy-S-adenosyl-L-methionine + 3-phenylpyruvate + H2O. Functionally, catalyzes the conversion of S-adenosyl-L-methionine (SAM) to carboxy-S-adenosyl-L-methionine (Cx-SAM). The sequence is that of Carboxy-S-adenosyl-L-methionine synthase from Salmonella paratyphi B (strain ATCC BAA-1250 / SPB7).